The following is a 278-amino-acid chain: Large ribosomal subunit protein uL2 (278 aa).

The disordered stretch occupies residues Arg222–Arg264.

The protein belongs to the universal ribosomal protein uL2 family. Part of the 50S ribosomal subunit. Forms a bridge to the 30S subunit in the 70S ribosome.

In terms of biological role, one of the primary rRNA binding proteins. Required for association of the 30S and 50S subunits to form the 70S ribosome, for tRNA binding and peptide bond formation. It has been suggested to have peptidyltransferase activity; this is somewhat controversial. Makes several contacts with the 16S rRNA in the 70S ribosome. This is Large ribosomal subunit protein uL2 from Methylobacterium radiotolerans (strain ATCC 27329 / DSM 1819 / JCM 2831 / NBRC 15690 / NCIMB 10815 / 0-1).